We begin with the raw amino-acid sequence, 425 residues long: Dihydroorotase (425 aa).

H56 and H58 together coordinate Zn(2+). Substrate is bound by residues 58–60 and N90; that span reads HYR. Zn(2+) is bound by residues D148, H175, and H228. N274 provides a ligand contact to substrate. Residue D301 participates in Zn(2+) binding. D301 is a catalytic residue. Substrate is bound by residues H305 and 319-320; that span reads FG.

The protein belongs to the metallo-dependent hydrolases superfamily. DHOase family. Class I DHOase subfamily. Zn(2+) serves as cofactor.

It catalyses the reaction (S)-dihydroorotate + H2O = N-carbamoyl-L-aspartate + H(+). Its pathway is pyrimidine metabolism; UMP biosynthesis via de novo pathway; (S)-dihydroorotate from bicarbonate: step 3/3. Catalyzes the reversible cyclization of carbamoyl aspartate to dihydroorotate. The polypeptide is Dihydroorotase (Lactobacillus delbrueckii subsp. bulgaricus (strain ATCC 11842 / DSM 20081 / BCRC 10696 / JCM 1002 / NBRC 13953 / NCIMB 11778 / NCTC 12712 / WDCM 00102 / Lb 14)).